The sequence spans 336 residues: tRNA(Ile)-lysidine synthase (336 aa).

40-45 contacts ATP; it reads SGGQDS.

This sequence belongs to the tRNA(Ile)-lysidine synthase family.

The protein localises to the cytoplasm. The catalysed reaction is cytidine(34) in tRNA(Ile2) + L-lysine + ATP = lysidine(34) in tRNA(Ile2) + AMP + diphosphate + H(+). Ligates lysine onto the cytidine present at position 34 of the AUA codon-specific tRNA(Ile) that contains the anticodon CAU, in an ATP-dependent manner. Cytidine is converted to lysidine, thus changing the amino acid specificity of the tRNA from methionine to isoleucine. This is tRNA(Ile)-lysidine synthase from Prochlorococcus marinus subsp. pastoris (strain CCMP1986 / NIES-2087 / MED4).